The following is a 1026-amino-acid chain: DNA cross-link repair 1A protein (1026 aa).

Residues 1–189 form a nuclear localization region region; sequence MLEDTWEEEI…RDSKEPLGSP (189 aa). Residues 12–110 are disordered; the sequence is EYKSKRKPKP…HRTRRGKQVT (99 aa). Residues 34–65 show a composition bias toward basic and acidic residues; it reads SVEKSTDGKHQSKGNEKRTSENPGKTKDHKVC. The span at 71 to 82 shows a compositional bias: low complexity; it reads SQISAGSSQSSS. Over residues 98-107 the composition is skewed to basic residues; sequence KKQHRTRRGK. The UBZ4-type zinc finger occupies 118 to 148; the sequence is DGYCPSCQMPFSSLLGQTPQWHVFECLDSPP. Zn(2+)-binding residues include Cys121, Cys124, His139, and Cys143. Residues Lys359, Lys434, and Lys522 each participate in a glycyl lysine isopeptide (Lys-Gly) (interchain with G-Cter in SUMO2) cross-link. The segment at 401 to 602 is nuclear focus formation; it reads SQEDLPHTDA…SSLSDLEFDA (202 aa). 3 disordered regions span residues 474-542, 560-590, and 602-651; these read PLEK…SKKV, ETSL…CKRK, and AKNL…PELG. Residues 527–540 are compositionally biased toward low complexity; the sequence is SPSSPKCSPSQPSK. The segment covering 569-581 has biased composition (polar residues); sequence EGPNVSPVVSPNQ. Phosphoserine occurs at positions 574 and 578. Basic residues predominate over residues 619–628; the sequence is RQHRRKRHKT. A Glycyl lysine isopeptide (Lys-Gly) (interchain with G-Cter in SUMO2) cross-link involves residue Lys657.

It belongs to the DNA repair metallo-beta-lactamase (DRMBL) family. Binds constitutively to TP53BP1. Binds CDC27, which is itself a component of the anaphase promoting complex (APC). Binds PIAS1.

It is found in the nucleus. The enzyme catalyses a beta-lactam + H2O = a substituted beta-amino acid. Functionally, may be required for DNA interstrand cross-link repair. Also required for checkpoint mediated cell cycle arrest in early prophase in response to mitotic spindle poisons. The chain is DNA cross-link repair 1A protein (Dclre1a) from Mus musculus (Mouse).